The following is a 242-amino-acid chain: Ribosomal RNA large subunit methyltransferase E (242 aa).

G64, W66, D84, D100, and D125 together coordinate S-adenosyl-L-methionine. The active-site Proton acceptor is K165. The interval 198–242 is disordered; the sequence is SSETFLLGRGLKKASPNGLDSRSGTAAEPAPLVPIGTNSMPANGD. The span at 233–242 shows a compositional bias: polar residues; the sequence is GTNSMPANGD.

This sequence belongs to the class I-like SAM-binding methyltransferase superfamily. RNA methyltransferase RlmE family.

The protein localises to the cytoplasm. It catalyses the reaction uridine(2552) in 23S rRNA + S-adenosyl-L-methionine = 2'-O-methyluridine(2552) in 23S rRNA + S-adenosyl-L-homocysteine + H(+). In terms of biological role, specifically methylates the uridine in position 2552 of 23S rRNA at the 2'-O position of the ribose in the fully assembled 50S ribosomal subunit. The polypeptide is Ribosomal RNA large subunit methyltransferase E (Verminephrobacter eiseniae (strain EF01-2)).